The sequence spans 133 residues: Small ribosomal subunit protein uS8 (133 aa).

This sequence belongs to the universal ribosomal protein uS8 family. In terms of assembly, part of the 30S ribosomal subunit. Contacts proteins S5 and S12.

In terms of biological role, one of the primary rRNA binding proteins, it binds directly to 16S rRNA central domain where it helps coordinate assembly of the platform of the 30S subunit. This Nostoc punctiforme (strain ATCC 29133 / PCC 73102) protein is Small ribosomal subunit protein uS8.